The chain runs to 129 residues: Small ribosomal subunit protein uS11 (129 aa).

This sequence belongs to the universal ribosomal protein uS11 family. Part of the 30S ribosomal subunit. Interacts with proteins S7 and S18. Binds to IF-3.

Functionally, located on the platform of the 30S subunit, it bridges several disparate RNA helices of the 16S rRNA. Forms part of the Shine-Dalgarno cleft in the 70S ribosome. The sequence is that of Small ribosomal subunit protein uS11 from Desulforamulus reducens (strain ATCC BAA-1160 / DSM 100696 / MI-1) (Desulfotomaculum reducens).